A 342-amino-acid polypeptide reads, in one-letter code: Oxygen-dependent coproporphyrinogen-III oxidase (342 aa).

Ser-98 lines the substrate pocket. Residues His-102 and His-112 each contribute to the a divalent metal cation site. His-112 (proton donor) is an active-site residue. 114–116 (NYR) is a binding site for substrate. A divalent metal cation-binding residues include His-146 and His-176. The tract at residues 266–301 (YVEFNLVWDRGTIFGLQTNGRTESILMSLPPLARWE) is important for dimerization.

Belongs to the aerobic coproporphyrinogen-III oxidase family. Homodimer. Requires a divalent metal cation as cofactor.

Its subcellular location is the cytoplasm. It carries out the reaction coproporphyrinogen III + O2 + 2 H(+) = protoporphyrinogen IX + 2 CO2 + 2 H2O. Its pathway is porphyrin-containing compound metabolism; protoporphyrin-IX biosynthesis; protoporphyrinogen-IX from coproporphyrinogen-III (O2 route): step 1/1. In terms of biological role, involved in the heme and chlorophyll biosynthesis. Catalyzes the aerobic oxidative decarboxylation of propionate groups of rings A and B of coproporphyrinogen-III to yield the vinyl groups in protoporphyrinogen-IX. The polypeptide is Oxygen-dependent coproporphyrinogen-III oxidase (Prochlorococcus marinus (strain MIT 9301)).